The primary structure comprises 226 residues: Thymidylate kinase (226 aa).

20–27 contacts ATP; the sequence is GGEGAGKS.

Belongs to the thymidylate kinase family.

It carries out the reaction dTMP + ATP = dTDP + ADP. Functionally, phosphorylation of dTMP to form dTDP in both de novo and salvage pathways of dTTP synthesis. The chain is Thymidylate kinase from Bradyrhizobium sp. (strain ORS 278).